We begin with the raw amino-acid sequence, 87 residues long: Cell division protein ZapA (87 aa).

A coiled-coil region spans residues 64–87; the sequence is VHDYIKLKEEYDRLLQKLHKEKDE.

It belongs to the ZapA family. Type 2 subfamily. As to quaternary structure, homodimer. Interacts with FtsZ.

Its subcellular location is the cytoplasm. Its function is as follows. Activator of cell division through the inhibition of FtsZ GTPase activity, therefore promoting FtsZ assembly into bundles of protofilaments necessary for the formation of the division Z ring. It is recruited early at mid-cell but it is not essential for cell division. This is Cell division protein ZapA from Geobacillus sp. (strain WCH70).